A 252-amino-acid chain; its full sequence is Autophagy-related protein 27 (252 aa).

A signal peptide spans 1–15 (MILASLLTFATAALA). Residues 16–161 (FDCSDKELER…SMKTKAACIT (146 aa)) form the MRH domain. The Lumenal segment spans residues 16–176 (FDCSDKELER…KKEKHDNGES (161 aa)). 3 cysteine pairs are disulfide-bonded: Cys18–Cys57, Cys66–Cys73, and Cys130–Cys159. N-linked (GlcNAc...) asparagine glycosylation is present at Asn49. Residues 177-197 (WGWFTWIFIFLVLFLSIYIIG) traverse the membrane as a helical segment. The Cytoplasmic segment spans residues 198 to 252 (GAWFQYNKGNAIDFQSALKEVVENFIELLKGLPSFGKEIIEKFTGRSNRGEYSAV).

This sequence belongs to the ATG27 family.

Its subcellular location is the cytoplasmic vesicle membrane. It localises to the golgi apparatus membrane. It is found in the mitochondrion membrane. The protein resides in the preautophagosomal structure membrane. Its function is as follows. Plays a key role in autophagy. Effector of VPS34 phosphatidylinositol 3-phosphate kinase signaling. Regulates the cytoplasm to vacuole transport (Cvt) vesicle formation. Plays a role in ATG protein retrieval from the pre-autophagosomal structure (PAS) and is especially required for autophagy-dependent cycling of ATG9. Finally, plays an important role in biofilm formation and resistance to antifungal compounds such as fluconazole, itraconazole, terbinafine and caspofungin. The chain is Autophagy-related protein 27 from Candida albicans (strain SC5314 / ATCC MYA-2876) (Yeast).